We begin with the raw amino-acid sequence, 110 residues long: Large ribosomal subunit protein uL22 (110 aa).

The protein belongs to the universal ribosomal protein uL22 family. In terms of assembly, part of the 50S ribosomal subunit.

Its function is as follows. This protein binds specifically to 23S rRNA; its binding is stimulated by other ribosomal proteins, e.g. L4, L17, and L20. It is important during the early stages of 50S assembly. It makes multiple contacts with different domains of the 23S rRNA in the assembled 50S subunit and ribosome. In terms of biological role, the globular domain of the protein is located near the polypeptide exit tunnel on the outside of the subunit, while an extended beta-hairpin is found that lines the wall of the exit tunnel in the center of the 70S ribosome. This is Large ribosomal subunit protein uL22 from Photobacterium profundum (strain SS9).